The chain runs to 69 residues: Large ribosomal subunit protein uL29 (69 aa).

Belongs to the universal ribosomal protein uL29 family.

This chain is Large ribosomal subunit protein uL29, found in Rhodopseudomonas palustris (strain BisB5).